Reading from the N-terminus, the 389-residue chain is Basigin (389 aa).

The N-terminal stretch at 1–21 (MAAALLLALAFTLLSGQGACA) is a signal peptide. Over 22 to 325 (AAGFLKAPLS…ETISLRVRSR (304 aa)) the chain is Extracellular. Positions 37-120 (GGSVVLHCEA…SSDPDRNHLT (84 aa)) constitute an Ig-like domain. 3 disulfide bridges follow: Cys-44–Cys-108, Cys-157–Cys-203, and Cys-242–Cys-305. The region spanning 138 to 219 (EPGTIQTSVQ…VGRSEINVEG (82 aa)) is the Ig-like C2-type domain. Residues Asn-160, Asn-270, and Asn-306 are each glycosylated (N-linked (GlcNAc...) asparagine). Positions 221–319 (PRIKVGKKSE…AQGTTRETIS (99 aa)) constitute an Ig-like V-type domain. A helical transmembrane segment spans residues 326 to 349 (MAALWPFLGIVAEVLVLVTIIFIY). Residues 350–389 (EKRRKPDQTLDEDDPGAAPLKGSGTHMNDKDKNVRQRNAT) lie on the Cytoplasmic side of the membrane. Residues 356 to 389 (DQTLDEDDPGAAPLKGSGTHMNDKDKNVRQRNAT) are disordered. A Phosphothreonine modification is found at Thr-358. At Ser-372 the chain carries Phosphoserine.

Interacts with NXNL1. Interacts with SLC2A1 and SLC16A1/GLUT1. Interacts with XKR8; promoting its localization at the cell membrane. As to quaternary structure, interacts with ATP1B2, MAG and L1CAM. Interacts with SLC16A7. Interacts with VEGFA, KDR/VEGFR2, PPIA/CYPA, SLC1A3, SLC16A11 and SLC16A12. Interacts with PPIL2; regulates BSG transport to the cell membrane. Interacts with SLC16A1; interaction mediates SLC16A1 targeting to the plasma membrane. Interacts with SLC16A3; interaction mediates SLC16A3 targeting to the plasma membrane. In terms of assembly, interacts with SLC16A6; this interaction mediates targeting to the plasma membrane. In terms of processing, N-glycosylated. Post-translationally, N-glycosylated. During spermatogenesis, probably deglycosylated during epididymal transit. In terms of tissue distribution, retina-specific. Expressed in both rods and cones (at protein level). Testis and caput, corpus and cauda epididymides (at protein level). Expressed in the brain, lung, liver, kidney, heart, spleen, uterus, retina and skeletal muscle.

The protein localises to the cell membrane. It localises to the photoreceptor inner segment. It is found in the cell projection. The protein resides in the cilium. Its subcellular location is the photoreceptor outer segment. The protein localises to the endoplasmic reticulum membrane. It localises to the basolateral cell membrane. In terms of biological role, essential for normal retinal maturation and development. Acts as a retinal cell surface receptor for NXNL1 and plays an important role in NXNL1-mediated survival of retinal cone photoreceptors. In association with glucose transporter SLC16A1/GLUT1 and NXNL1, promotes retinal cone survival by enhancing aerobic glycolysis and accelerating the entry of glucose into photoreceptors. Functionally, signaling receptor for cyclophilins, essential for PPIA/CYPA and PPIB/CYPB-dependent signaling related to chemotaxis and adhesion of immune cells. Plays an important role in targeting the monocarboxylate transporters SLC16A1, SLC16A3 and SLC16A8 to the plasma membrane. Acts as a coreceptor for vascular endothelial growth factor receptor 2 (KDR/VEGFR2) in endothelial cells enhancing its VEGFA-mediated activation and downstream signaling. Promotes angiogenesis through EPAS1/HIF2A-mediated up-regulation of VEGFA and KDR/VEGFR2 in endothelial cells. Plays an important role in spermatogenesis; mediates interactions between germ cells and Sertoli cell and is essential for the development/differentiation of germ cells to round spermatids. The sequence is that of Basigin (Bsg) from Mus musculus (Mouse).